The following is a 170-amino-acid chain: VIP peptides (170 aa).

An N-terminal signal peptide occupies residues 1–20; it reads MDTRNKAQLLVLLTLLSVLF. A propeptide spanning residues 21–79 is cleaved from the precursor; the sequence is SQTSAWPLYRAPSALRLGDRIPFEGANEPDQVSLKEDIDMLQNALAENDTPYYDVSRNA. Ser-76 carries the phosphoserine modification. Met-107 carries the methionine amide modification. At Asn-152 the chain carries Asparagine amide. The propeptide occupies 156–170; it reads SSEGESPDFPEELEK.

The protein belongs to the glucagon family.

Its subcellular location is the secreted. Functionally, VIP is a neuropeptide involved in a diverse array of physiological processes through activating the PACAP subfamily of class B1 G protein-coupled receptors: VIP receptor 1 (VPR1) and VIP receptor 2 (VPR2). Abundantly expressed throughout the CNS and peripheral nervous systems where they primarily exert neuroprotective and immune modulatory roles. Also causes vasodilation, lowers arterial blood pressure, stimulates myocardial contractility, increases glycogenolysis and relaxes the smooth muscle of trachea, stomach and gall bladder. Its function is as follows. PHM-27 and PHV-42 are two bioactive forms from proteolysis of the same precursor protein, that cause vasodilation. PHM-27 is a potent agonist of the calcitonin receptor CALCR, with similar efficacy as calcitonin. In Homo sapiens (Human), this protein is VIP peptides.